The following is a 356-amino-acid chain: MMIGETRRTYPTVEIPPWPVLEELTTSEFFSPVMNSPDCSMLEALAGLQRYLPSNEPDPESYPDLLGPDSPIDAYSCDHFRMYDFKVRRCARGRSHDWTECPYAHPGEKARRRDPRKYHYSGTACPDFRKGGCKKGDSCEFAHGVFECWLHPARYRTQPCKDGGNCLRKICFFAHSPDQLRFLHTRSPDRVDSFDVSSPIRARAFQLSISPVSGSPPMSPRADSESSPMTQSLSRSLGSCSINDVVPSFRNLQFNSVKSFPRNNPLFGFGSPRGSILGPGFQSLPTTPTRPGNLDIWEYGLEEEPVMERVVESGRELREKMREKLHKENCMDRVAQDPDQNLGEAPDVGWVSDLLM.

2 consecutive C3H1-type zinc fingers follow at residues Tyr120–Phe146 and Tyr155–Pro177. Positions Ile209–Arg235 are disordered. Residues Glu225 to Arg235 show a composition bias toward polar residues.

The polypeptide is Zinc finger CCCH domain-containing protein 49 (Arabidopsis thaliana (Mouse-ear cress)).